The sequence spans 860 residues: Ras GTPase-activating-like protein gapA (860 aa).

Positions 1 to 20 (MEGLEIEDEDVILLDEDDDS) are enriched in acidic residues. A disordered region spans residues 1–48 (MEGLEIEDEDVILLDEDDDSSSSSTVNNSSSNIKNNGNTNNNIGNDDS). Positions 21-46 (SSSSTVNNSSSNIKNNGNTNNNIGND) are enriched in low complexity. A coiled-coil region spans residues 146–185 (AEIQELKRNMVAEIRRNHLLERDVNKLDKRIALLIKHRSN). A Ras-GAP domain is found at 269–515 (FLILSLFRLA…SIVRQYLEDL (247 aa)). Residues 663–732 (NNPQLSSNAE…TIALRDLRKH (70 aa)) adopt a coiled-coil conformation.

As to quaternary structure, heterotetramer. Quaternary complex with activated rac1A, ctxA and ctxB in the absence of rgaA.

Its function is as follows. Part of signaling pathway that is required for completion of cytokinesis. gapA and rgaA control cortexillin localization to the cleavage furrow and hence may be involved in cleavage of the midbody in the final stage of cytokinesis by regulating the actin cytoskeleton. Forms a complex by linking activated rac1A to ctxA in the absence of rgaA. Assembly of this complex is necessary for the recruitment of cortexillin to the midzone of the dividing cell. This chain is Ras GTPase-activating-like protein gapA (gapA), found in Dictyostelium discoideum (Social amoeba).